We begin with the raw amino-acid sequence, 66 residues long: Toxin Boma6b (66 aa).

The 63-residue stretch at 2–64 folds into the LCN-type CS-alpha/beta domain; sequence RDAYIAQNYN…VPIKVEGKCH (63 aa). 4 disulfide bridges follow: Cys-12–Cys-63, Cys-16–Cys-36, Cys-22–Cys-46, and Cys-26–Cys-48.

Belongs to the long (4 C-C) scorpion toxin superfamily. Sodium channel inhibitor family. Alpha subfamily. As to expression, expressed by the venom gland.

It is found in the secreted. Its function is as follows. Alpha toxins bind voltage-independently at site-3 of sodium channels (Nav) and inhibit the inactivation of the activated channels, thereby blocking neuronal transmission. This chain is Toxin Boma6b, found in Buthus occitanus mardochei (Moroccan scorpion).